The primary structure comprises 308 residues: Oxygen-dependent coproporphyrinogen-III oxidase (308 aa).

Residue Ser-100 coordinates substrate. A divalent metal cation is bound by residues His-104 and His-114. His-114 functions as the Proton donor in the catalytic mechanism. Residue 116 to 118 (NFR) participates in substrate binding. A divalent metal cation contacts are provided by His-153 and His-183. The important for dimerization stretch occupies residues 248–283 (YVEFNLVFDRGTIFGLQSGGRTESILSSMPPMASWR). Substrate is bound at residue 266–268 (GGR).

Belongs to the aerobic coproporphyrinogen-III oxidase family. In terms of assembly, homodimer. Requires a divalent metal cation as cofactor.

It localises to the cytoplasm. It carries out the reaction coproporphyrinogen III + O2 + 2 H(+) = protoporphyrinogen IX + 2 CO2 + 2 H2O. The protein operates within porphyrin-containing compound metabolism; protoporphyrin-IX biosynthesis; protoporphyrinogen-IX from coproporphyrinogen-III (O2 route): step 1/1. Functionally, involved in the heme biosynthesis. Catalyzes the aerobic oxidative decarboxylation of propionate groups of rings A and B of coproporphyrinogen-III to yield the vinyl groups in protoporphyrinogen-IX. The protein is Oxygen-dependent coproporphyrinogen-III oxidase of Francisella tularensis subsp. novicida (strain U112).